Consider the following 189-residue polypeptide: Ribosome maturation factor RimM (189 aa).

Residues 1–16 (MAPSCPTRSRVWSSRT) show a composition bias toward polar residues. Positions 1–21 (MAPSCPTRSRVWSSRTSPPPD) are disordered. The PRC barrel domain occupies 118 to 189 (ENEFYWSDLI…TVEVDWGEDY (72 aa)).

This sequence belongs to the RimM family. As to quaternary structure, binds ribosomal protein uS19.

The protein resides in the cytoplasm. Functionally, an accessory protein needed during the final step in the assembly of 30S ribosomal subunit, possibly for assembly of the head region. Essential for efficient processing of 16S rRNA. May be needed both before and after RbfA during the maturation of 16S rRNA. It has affinity for free ribosomal 30S subunits but not for 70S ribosomes. This Thiobacillus denitrificans (strain ATCC 25259 / T1) protein is Ribosome maturation factor RimM.